Consider the following 598-residue polypeptide: Elongation factor 4 (598 aa).

The region spanning 2–183 (KHIRNFCIIA…AIIEKIPHPK (182 aa)) is the tr-type G domain. GTP-binding positions include 14–19 (DHGKST) and 130–133 (NKVD).

This sequence belongs to the TRAFAC class translation factor GTPase superfamily. Classic translation factor GTPase family. LepA subfamily.

Its subcellular location is the cell inner membrane. It carries out the reaction GTP + H2O = GDP + phosphate + H(+). Required for accurate and efficient protein synthesis under certain stress conditions. May act as a fidelity factor of the translation reaction, by catalyzing a one-codon backward translocation of tRNAs on improperly translocated ribosomes. Back-translocation proceeds from a post-translocation (POST) complex to a pre-translocation (PRE) complex, thus giving elongation factor G a second chance to translocate the tRNAs correctly. Binds to ribosomes in a GTP-dependent manner. The sequence is that of Elongation factor 4 from Flavobacterium psychrophilum (strain ATCC 49511 / DSM 21280 / CIP 103535 / JIP02/86).